Consider the following 380-residue polypeptide: Protein Wnt-5a (380 aa).

A signal peptide spans 1 to 37 (MKKPIGILSPGVALGTAGGAMSSKFFLMALATFFSFA). Positions 38 to 61 (QVVIEANSWWSLGMNNPVQMSEVY) are excised as a propeptide. Cysteines 104 and 115 form a disulfide. 2 N-linked (GlcNAc...) asparagine glycosylation sites follow: N114 and N120. 10 disulfides stabilise this stretch: C154–C162, C164–C182, C238–C252, C240–C247, C309–C340, C325–C335, C339–C379, C355–C370, C357–C367, and C362–C363. The O-palmitoleoyl serine; by PORCN moiety is linked to residue S244. N-linked (GlcNAc...) asparagine glycosylation is found at N312 and N326.

This sequence belongs to the Wnt family. Forms a soluble 1:1 complex with AFM; this prevents oligomerization and is required for prolonged biological activity. The complex with AFM may represent the physiological form in body fluids. Homooligomer; disulfide-linked, leading to inactivation. Interacts with PORCN. Interacts with WLS. Interacts with glypican GCP3. Interacts with PKD1 (via extracellular domain). Interacts with TMEM67. Post-translationally, glycosylation is necessary for secretion but not for activity. Palmitoleoylation is required for efficient binding to frizzled receptors. Depalmitoleoylation leads to Wnt signaling pathway inhibition. In terms of processing, proteolytic processing by TIKI1 and TIKI2 promotes oxidation and formation of large disulfide-bond oligomers, leading to inactivation of WNT5A. In terms of tissue distribution, expressed in a gradient at the caudal end of the embryo during gastrulation and later in the distal-most aspect of several structures that extend from the body such as the limbs and genital tubercle.

The protein localises to the secreted. Its subcellular location is the extracellular space. It is found in the extracellular matrix. Its function is as follows. Ligand for members of the frizzled family of seven transmembrane receptors. Can activate or inhibit canonical Wnt signaling, depending on receptor context. In the presence of FZD4, activates beta-catenin signaling. In the presence of ROR2, inhibits the canonical Wnt pathway by promoting beta-catenin degradation through a GSK3-independent pathway which involves down-regulation of beta-catenin-induced reporter gene expression. Suppression of the canonical pathway allows chondrogenesis to occur and inhibits tumor formation. Stimulates cell migration. Decreases proliferation, migration, invasiveness and clonogenicity of carcinoma cells and may act as a tumor suppressor. Mediates motility of melanoma cells. Required during embryogenesis for extension of the primary anterior-posterior axis and for outgrowth of limbs and the genital tubercle. Inhibits type II collagen expression in chondrocytes. The sequence is that of Protein Wnt-5a (Wnt5a) from Mus musculus (Mouse).